The chain runs to 993 residues: P3N-PIPO polyprotein (993 aa).

Positions 154-298 (GVTPYSVQQL…ESTMLSTHHY (145 aa)) constitute a Peptidase S30 domain. Catalysis depends on for P1 proteinase activity residues His207, Asp216, and Ser249. An Involved in interaction with stylet and aphid transmission motif is present at residues 349-352 (KITC). Residues 607 to 609 (PTK) carry the Involved in virions binding and aphid transmission motif. One can recognise a Peptidase C6 domain in the interval 633-755 (MYIAKSGYCY…DSEMKHYRVG (123 aa)). Residues Cys641 and His714 each act as for helper component proteinase activity in the active site.

The protein belongs to the potyviridae P3N-PIPO polyprotein family. In terms of assembly, interacts (via PIPO domain) with host PCaP1 protein; this interaction may help to anchor the movement complex to the plasma membrane from which the complex could move to the plasmodesmata. In terms of processing, potyviral RNA is expressed as two polyproteins which undergo post-translational proteolytic processing. Genome polyprotein is processed by NIa-pro, P1 and HC-pro proteinases resulting in the production of at least ten individual proteins. P3N-PIPO is cleaved by P1 and HC-pro proteinases resulting in the production of three individual proteins. The P1 proteinase and the HC-pro cleave only their respective C-termini autocatalytically.

The protein resides in the host cell junction. The protein localises to the host plasmodesma. The catalysed reaction is Hydrolyzes a Gly-|-Gly bond at its own C-terminus, commonly in the sequence -Tyr-Xaa-Val-Gly-|-Gly, in the processing of the potyviral polyprotein.. Required for aphid transmission and also has proteolytic activity. Only cleaves a Gly-Gly dipeptide at its own C-terminus. Interacts with virions and aphid stylets. Acts as a suppressor of RNA-mediated gene silencing, also known as post-transcriptional gene silencing (PTGS), a mechanism of plant viral defense that limits the accumulation of viral RNAs. May have RNA-binding activity. In terms of biological role, allows efficient cell to cell propagation, by bypassing the host cell wall barrier. Transports viral genome to neighboring plant cells directly through plasmosdesmata, without any budding. This is P3N-PIPO polyprotein from Solanum betaceum (Tamarillo).